A 136-amino-acid polypeptide reads, in one-letter code: Probable intron-encoded DNA endonuclease 3 (136 aa).

This sequence belongs to the LAGLIDADG endonuclease family.

The protein resides in the mitochondrion. Mitochondrial DNA endonuclease involved in intron homing. The polypeptide is Probable intron-encoded DNA endonuclease 3 (hegI3) (Mycosarcoma maydis (Corn smut fungus)).